We begin with the raw amino-acid sequence, 539 residues long: Chaperonin GroEL (539 aa).

ATP-binding positions include 29-32 (TIGP), 86-90 (DGTTT), glycine 413, 476-478 (NAA), and aspartate 492.

Belongs to the chaperonin (HSP60) family. As to quaternary structure, forms a cylinder of 14 subunits composed of two heptameric rings stacked back-to-back. Interacts with the co-chaperonin GroES.

It localises to the cytoplasm. It catalyses the reaction ATP + H2O + a folded polypeptide = ADP + phosphate + an unfolded polypeptide.. Together with its co-chaperonin GroES, plays an essential role in assisting protein folding. The GroEL-GroES system forms a nano-cage that allows encapsulation of the non-native substrate proteins and provides a physical environment optimized to promote and accelerate protein folding. This Staphylococcus haemolyticus (strain JCSC1435) protein is Chaperonin GroEL.